The primary structure comprises 209 residues: Large ribosomal subunit protein uL4 (209 aa).

A disordered region spans residues 46–71; that stretch reads GTSSTKTRSEVRGSSKKPWKQKGTGR. Basic residues predominate over residues 59-71; it reads SSKKPWKQKGTGR.

This sequence belongs to the universal ribosomal protein uL4 family. As to quaternary structure, part of the 50S ribosomal subunit.

Functionally, one of the primary rRNA binding proteins, this protein initially binds near the 5'-end of the 23S rRNA. It is important during the early stages of 50S assembly. It makes multiple contacts with different domains of the 23S rRNA in the assembled 50S subunit and ribosome. Its function is as follows. Forms part of the polypeptide exit tunnel. The chain is Large ribosomal subunit protein uL4 from Borrelia garinii subsp. bavariensis (strain ATCC BAA-2496 / DSM 23469 / PBi) (Borreliella bavariensis).